The primary structure comprises 470 residues: Ras-like GTPase HI_1637 (470 aa).

Residues 27–34 (GLSRSGKT) carry the Walker A motif motif. GTP is bound by residues serine 29, glycine 32, lysine 33, threonine 34, alanine 35, tryptophan 98, serine 101, threonine 102, arginine 103, lysine 342, aspartate 344, and histidine 345. GDP is bound by residues glycine 32, lysine 33, threonine 34, alanine 35, tryptophan 98, serine 101, and threonine 102. GDP contacts are provided by lysine 342, aspartate 344, histidine 345, alanine 383, and valine 384. Valine 384 serves as a coordination point for GTP.

This sequence to E.coli YcjX. Monomer in solution. Mg(2+) serves as cofactor.

It catalyses the reaction GTP + H2O = GDP + phosphate + H(+). Its activity is regulated as follows. Alternates between an inactive form bound to GDP and an active form bound to GTP. Likely activated by a guanine nucleotide-exchange factor (GEF). Functionally, binds GTP and GDP. Has intrinsic GTPase activity. Does not hydrolyze ATP. May act as a transducer of stress responses. The sequence is that of Ras-like GTPase HI_1637 from Haemophilus influenzae (strain ATCC 51907 / DSM 11121 / KW20 / Rd).